The following is a 272-amino-acid chain: Shikimate dehydrogenase (NADP(+)) (272 aa).

Shikimate is bound by residues 14–16 and Thr61; that span reads SRS. The active-site Proton acceptor is the Lys65. NADP(+) is bound at residue Glu77. Shikimate-binding residues include Asn86 and Asp102. NADP(+) contacts are provided by residues 126-130, 149-154, and Met213; these read GVGGA and NRTFPR. Tyr215 contributes to the shikimate binding site. Gly237 contributes to the NADP(+) binding site.

It belongs to the shikimate dehydrogenase family. In terms of assembly, homodimer.

The enzyme catalyses shikimate + NADP(+) = 3-dehydroshikimate + NADPH + H(+). It functions in the pathway metabolic intermediate biosynthesis; chorismate biosynthesis; chorismate from D-erythrose 4-phosphate and phosphoenolpyruvate: step 4/7. Its function is as follows. Involved in the biosynthesis of the chorismate, which leads to the biosynthesis of aromatic amino acids. Catalyzes the reversible NADPH linked reduction of 3-dehydroshikimate (DHSA) to yield shikimate (SA). This is Shikimate dehydrogenase (NADP(+)) from Sodalis glossinidius (strain morsitans).